Here is a 522-residue protein sequence, read N- to C-terminus: Aspartic and glutamic acid-rich protein (522 aa).

The first 16 residues, Met1–Ala16, serve as a signal peptide directing secretion. Composition is skewed to basic and acidic residues over residues Tyr72–Ser81 and Ser93–Ala102. Residues Tyr72–Ile497 form a disordered region. The span at Asp109–Asp125 shows a compositional bias: acidic residues. Basic and acidic residues predominate over residues Lys142 to Asp152. Composition is skewed to acidic residues over residues Met153 to Lys166, Phe173 to Val200, Asp228 to Asp261, and Glu267 to Gly283. A compositionally biased stretch (basic and acidic residues) spans Ser284–Glu343. The stretch at Asp319–Glu465 forms a coiled coil. Over residues Asp358–Ala374 the composition is skewed to acidic residues. Composition is skewed to basic and acidic residues over residues Glu375–Lys397, Asp407–Lys453, and Leu461–Asp491.

As to expression, component of the acid-soluble organic matrix of the aragonitic skeleton (at protein level).

The protein localises to the secreted. The protein is Aspartic and glutamic acid-rich protein of Acropora millepora (Staghorn coral).